We begin with the raw amino-acid sequence, 935 residues long: Epstein-Barr nuclear antigen 3 (935 aa).

Disordered regions lie at residues 1–89 (MDKD…DLPG), 342–373 (HVEGATGETREESEDTESDGDDEDLPCIVSRG), 399–446 (TEQG…VPEP), 611–634 (KQASVEVQPPQVTQVSPQQPMEGP), and 883–908 (HGRPRPRTPEWPVQGESGQNVTDHEP). The segment covering 10–19 (ALDDNMEEEV) has biased composition (acidic residues). Polar residues predominate over residues 20 to 29 (PSTSVVQEQV). The span at 352–366 (EESEDTESDGDDEDL) shows a compositional bias: acidic residues. Residues 399–410 (TEQGKEVLEKAR) show a composition bias toward basic and acidic residues. Over residues 431–440 (SDETATSHGS) the composition is skewed to polar residues. A compositionally biased stretch (low complexity) spans 615–630 (VEVQPPQVTQVSPQQP).

Belongs to the herpesviridae EBNA-3 family. In terms of assembly, interacts with human UCKL1. Interacts with host CTPB1; this interaction seems important for EBNA3-mediated transcriptional repression. Interacts with host RBPJ. Interacts with host USP12 and WDR48; these interactions form a deubiquitination-competent complex.

It localises to the host nucleus matrix. In terms of biological role, plays an essential role for activation and immortalization of human B-cells. Represses transcription of viral promoters TP1 and Cp through interaction with host RBPJ, and inhibits EBNA2-mediated activation of these promoters. Since Cp is the promoter for all EBNA mRNAs, EBNA3A probably contributes to a negative autoregulatory control loop. The sequence is that of Epstein-Barr nuclear antigen 3 (EBNA3) from Homo sapiens (Human).